Consider the following 143-residue polypeptide: Cytochrome c-type biogenesis protein CcmE (143 aa).

The Cytoplasmic portion of the chain corresponds to 1–8 (MNPVRRRK). The helical; Signal-anchor for type II membrane protein transmembrane segment at 9 to 29 (LFILLFALTILSAAAALVLYA) threads the bilayer. Topologically, residues 30-143 (LRQNISLFYT…KSALADKVKQ (114 aa)) are periplasmic. Residues His124 and Tyr128 each contribute to the heme site.

This sequence belongs to the CcmE/CycJ family.

It localises to the cell inner membrane. Heme chaperone required for the biogenesis of c-type cytochromes. Transiently binds heme delivered by CcmC and transfers the heme to apo-cytochromes in a process facilitated by CcmF and CcmH. This chain is Cytochrome c-type biogenesis protein CcmE, found in Legionella pneumophila (strain Corby).